Reading from the N-terminus, the 459-residue chain is cAMP-dependent protein kinase regulatory subunit (459 aa).

The interval 30 to 219 (QFCANYFNTK…TLANNLKNNF (190 aa)) is dimerization and phosphorylation. Disordered regions lie at residues 78–109 (VNDR…DTKT) and 125–168 (FDVK…PSSK). Positions 95–109 (HSNHDEDPHAKDTKT) are enriched in basic and acidic residues. Residues 146 to 168 (KPSSSSQPNQQSASASSKTPSSK) are compositionally biased toward low complexity. A Phosphoserine modification is found at S180. 3',5'-cyclic AMP contacts are provided by residues 220–335 (LFKQ…FLKD), E285, R294, 338–454 (VLKS…KSQD), E404, and R413.

Belongs to the cAMP-dependent kinase regulatory chain family. As to quaternary structure, tetramer, composed of 2 regulatory (R) and 2 catalytic (C) subunits. In the presence of cAMP it dissociates into 2 active monomeric C subunits and an R dimer.

In Candida albicans (strain SC5314 / ATCC MYA-2876) (Yeast), this protein is cAMP-dependent protein kinase regulatory subunit (BCY1).